The following is a 137-amino-acid chain: Holo-[acyl-carrier-protein] synthase (137 aa).

Residues Asp-8 and Glu-57 each coordinate Mg(2+).

This sequence belongs to the P-Pant transferase superfamily. AcpS family. The cofactor is Mg(2+).

It is found in the cytoplasm. It catalyses the reaction apo-[ACP] + CoA = holo-[ACP] + adenosine 3',5'-bisphosphate + H(+). Transfers the 4'-phosphopantetheine moiety from coenzyme A to a Ser of acyl-carrier-protein. This Mesorhizobium japonicum (strain LMG 29417 / CECT 9101 / MAFF 303099) (Mesorhizobium loti (strain MAFF 303099)) protein is Holo-[acyl-carrier-protein] synthase.